The primary structure comprises 242 residues: MTFHGDAEYASEPDGMSKSGAIGLSRDNVPFSHGRAIFINPVPFKPSSTSSSVYSFKTSFYFVISPRPKNPNPGHGLAFIIVPNDRNDSASGLGYLSLVNRFSNGNPKNHLFAVEFDVFKDKSLGDINDNHIGINNNSVNSTVSKKAGYWYQSKIEGKNRWLFKELKLSGNGYRAWIEYENGKVTVTIGRSQEKPKRPLIEARVDLSKVFLEKMYVGFAGSMGRGVERHEILDWSFENSAKD.

A legume-lectin like region spans residues 3-237 (FHGDAEYASE…RHEILDWSFE (235 aa)). At serine 207 the chain carries Phosphoserine.

This sequence belongs to the leguminous lectin family.

The chain is Lectin-like protein At1g53060 from Arabidopsis thaliana (Mouse-ear cress).